The chain runs to 137 residues: MGAHLVRRYLGDASVEPDPLQMPTFPPDYGFPERKEREMVATQQEMMDAQLRLQLRDYCAHYLIRLLKCKRDSFPNFXACKQERHDWDYCEHRDYVMRMKEFERERRLLQRKKRREKKAAELAKGQGPGEVDPKVAL.

Glycine 2 carries N-myristoyl glycine lipidation. Residues 56–98 form the CHCH domain; sequence RDYCAHYLIRLLKCKRDSFPNFXACKQERHDWDYCEHRDYVMR. The Cx9C motif 1 signature appears at 59–69; sequence CAHYLIRLLKC. 2 disulfides stabilise this stretch: cysteine 59/cysteine 90 and cysteine 69/cysteine 80. Residue serine 73 is modified to Phosphoserine. Residues 80–90 carry the Cx9C motif 2 motif; sequence CKQERHDWDYC. A disordered region spans residues 113 to 137; it reads KRREKKAAELAKGQGPGEVDPKVAL.

It belongs to the complex I NDUFB7 subunit family. Complex I is composed of 45 different subunits.

It localises to the mitochondrion inner membrane. Its subcellular location is the mitochondrion intermembrane space. Functionally, accessory subunit of the mitochondrial membrane respiratory chain NADH dehydrogenase (Complex I), that is believed not to be involved in catalysis. Complex I functions in the transfer of electrons from NADH to the respiratory chain. The immediate electron acceptor for the enzyme is believed to be ubiquinone. The sequence is that of NADH dehydrogenase [ubiquinone] 1 beta subcomplex subunit 7 (NDUFB7) from Pan troglodytes (Chimpanzee).